The chain runs to 109 residues: Fluoride-specific ion channel FluC 1 (109 aa).

The next 3 membrane-spanning stretches (helical) occupy residues 21–41 (FYFK…GFFI), 52–72 (ILFS…HFLY), and 83–103 (LFIY…IGFQ).

It belongs to the fluoride channel Fluc/FEX (TC 1.A.43) family.

The protein resides in the cell inner membrane. It carries out the reaction fluoride(in) = fluoride(out). In terms of biological role, fluoride-specific ion channel. Important for reducing fluoride concentration in the cell, thus reducing its toxicity. The sequence is that of Fluoride-specific ion channel FluC 1 from Prochlorococcus marinus subsp. pastoris (strain CCMP1986 / NIES-2087 / MED4).